We begin with the raw amino-acid sequence, 75 residues long: UPF0352 protein ESA_01049 (75 aa).

Belongs to the UPF0352 family.

The chain is UPF0352 protein ESA_01049 from Cronobacter sakazakii (strain ATCC BAA-894) (Enterobacter sakazakii).